A 302-amino-acid chain; its full sequence is Tegument protein VP22 (302 aa).

Residues 1–10 (MASSDGDRLC) are compositionally biased toward basic and acidic residues. Disordered regions lie at residues 1-42 (MASS…PDDS) and 125-170 (SFTK…SSWC). An interaction with gE region spans residues 154–244 (RPISFSTAPK…ANEADLGEGA (91 aa)). Residues 157 to 170 (SFSTAPKTATSSWC) show a composition bias toward polar residues. The short motif at 212 to 224 (LDRLLTGAVIRIT) is the Nuclear export signal element. A disordered region spans residues 243–302 (GASVSKRGHNRKTGDLQGGMGNEPMYAQVRKPKSRTDTQTTGRITNRSRARSASRTDTRK).

Belongs to the alphaherpesvirinae VP22 tegument protein family. As to quaternary structure, interacts with gE (via C-terminus); this interaction is necessary for the recruitment of VP22/ORF9 to the Golgi and its packaging into virions. Interacts with gM (via C-terminus). Interacts with VP16/ORF10; this interaction allows the formation of a tripartite complex composed of VP16/ORF10, VP22/ORF9 and VHS/ORF17. Interacts with the capsid-binding protein ORF44. Interacts with host CGAS. Highly phosphorylated in the host cell. Packaging is selective for underphosphorylated forms.

Its subcellular location is the virion tegument. It is found in the host cytoplasm. It localises to the host nucleus. The protein resides in the host Golgi apparatus. In terms of biological role, tegument protein that plays different roles during the time course of infection. Participates in both the accumulation of viral mRNAs and viral protein translation at late time of infection. Modulates the RNase activity of the virion host shutoff protein ORF17 probably to ensure necessary levels of key cellular mRNAs and proteins. Plays a role in microtubule reorganization that occurs after viral infection by stabilizing microtubule network. Plays a role in the inhibition of host innate immune system by targeting the CGAS enzymatic activity which is the principal cytosolic DNA sensor that detects invading viral DNA. Acts by mediating disruption of liquid-like droplets in which CGAS is activated, thereby preventing CGAS activity. The chain is Tegument protein VP22 from Homo sapiens (Human).